Reading from the N-terminus, the 334-residue chain is Beta-ketoacyl-[acyl-carrier-protein] synthase III (334 aa).

Catalysis depends on residues Cys-114 and His-253. Residues 254-258 (QANIR) are ACP-binding. Asn-283 is an active-site residue.

The protein belongs to the thiolase-like superfamily. FabH family. As to quaternary structure, homodimer.

It is found in the cytoplasm. It carries out the reaction malonyl-[ACP] + acetyl-CoA + H(+) = 3-oxobutanoyl-[ACP] + CO2 + CoA. It functions in the pathway lipid metabolism; fatty acid biosynthesis. Catalyzes the condensation reaction of fatty acid synthesis by the addition to an acyl acceptor of two carbons from malonyl-ACP. Catalyzes the first condensation reaction which initiates fatty acid synthesis and may therefore play a role in governing the total rate of fatty acid production. Possesses both acetoacetyl-ACP synthase and acetyl transacylase activities. Its substrate specificity determines the biosynthesis of branched-chain and/or straight-chain of fatty acids. The polypeptide is Beta-ketoacyl-[acyl-carrier-protein] synthase III (Campylobacter concisus (strain 13826)).